Reading from the N-terminus, the 685-residue chain is Bifunctional diguanylate cyclase/cyclic di-GMP phosphodiesterase MucR (685 aa).

The MHYT domain maps to 6–199; sequence YNQVLVAFSL…YTGMAAAQFP (194 aa). The next 7 helical transmembrane spans lie at 9–29, 44–64, 77–97, 117–137, 141–161, 175–195, and 214–234; these read VLVA…LDMA, LIGG…VGML, GLTL…LWLV, GIAA…GIVY, WLGL…WIAF, AGAA…GMAA, and GWLA…ALIV. At 235–685 the chain is on the cytoplasmic side; it reads SVLDSRLEAR…PAEQLLASVA (451 aa). The GGDEF domain maps to 293–425; it reads RRFAVLFMDL…GRNGYCFFES (133 aa). Positions 434-685 constitute an EAL domain; the sequence is QLQLLHDLRQ…PAEQLLASVA (252 aa). The 3',3'-c-di-GMP site is built by glutamine 455, glutamate 469, leucine 472, arginine 473, asparagine 528, and glutamine 533. Glutamate 469 contacts Mg(2+). Residue asparagine 528 participates in Mg(2+) binding. Glutamate 560, aspartate 590, and aspartate 591 together coordinate Mg(2+). Residue aspartate 590 participates in 3',3'-c-di-GMP binding. Arginine 614 contributes to the 3',3'-c-di-GMP binding site. A Mg(2+)-binding site is contributed by glutamate 647. 2 residues coordinate 3',3'-c-di-GMP: glutamate 650 and phenylalanine 669.

As to quaternary structure, homodimer. It depends on Mg(2+) as a cofactor.

The protein localises to the cell inner membrane. It carries out the reaction 2 GTP = 3',3'-c-di-GMP + 2 diphosphate. The catalysed reaction is 3',3'-c-di-GMP + H2O = 5'-phosphoguanylyl(3'-&gt;5')guanosine + H(+). Its function is as follows. Displays both diguanylate cyclase (DGC) and c-di-GMP-specific phosphodiesterase (PDE) activity. Probably modulates DGC and PDE activities, and thus c-di-GMP levels, in a growth mode-dependent manner. May act as a PDE under planktonic growth conditions and as a DGC in biofilms. During biofilm formation, it specifically activates alginate biosynthesis via generation of a localized c-di-GMP pool in the vicinity of the alginate biosynthesis protein Alg44. In Pseudomonas aeruginosa (strain ATCC 15692 / DSM 22644 / CIP 104116 / JCM 14847 / LMG 12228 / 1C / PRS 101 / PAO1), this protein is Bifunctional diguanylate cyclase/cyclic di-GMP phosphodiesterase MucR.